The sequence spans 554 residues: Urocanate hydratase (554 aa).

Residues 51–52 (GG), Gln-129, 175–177 (GMG), Glu-195, 241–242 (NA), 262–266 (QTSAH), 272–273 (YL), and Tyr-321 contribute to the NAD(+) site. Residue Cys-409 is part of the active site. Gly-491 contacts NAD(+).

The protein belongs to the urocanase family. NAD(+) is required as a cofactor.

It localises to the cytoplasm. The catalysed reaction is 4-imidazolone-5-propanoate = trans-urocanate + H2O. The protein operates within amino-acid degradation; L-histidine degradation into L-glutamate; N-formimidoyl-L-glutamate from L-histidine: step 2/3. In terms of biological role, catalyzes the conversion of urocanate to 4-imidazolone-5-propionate. The sequence is that of Urocanate hydratase from Methylobacterium nodulans (strain LMG 21967 / CNCM I-2342 / ORS 2060).